The sequence spans 155 residues: Endoribonuclease YbeY (155 aa).

Positions 110, 114, and 120 each coordinate Zn(2+).

This sequence belongs to the endoribonuclease YbeY family. The cofactor is Zn(2+).

Its subcellular location is the cytoplasm. In terms of biological role, single strand-specific metallo-endoribonuclease involved in late-stage 70S ribosome quality control and in maturation of the 3' terminus of the 16S rRNA. The protein is Endoribonuclease YbeY of Deinococcus geothermalis (strain DSM 11300 / CIP 105573 / AG-3a).